The primary structure comprises 384 residues: 1-deoxy-D-xylulose 5-phosphate reductoisomerase (384 aa).

Positions 10, 11, 12, 13, 36, 38, and 122 each coordinate NADPH. Residue Lys-123 participates in 1-deoxy-D-xylulose 5-phosphate binding. Glu-124 serves as a coordination point for NADPH. Asp-148 contributes to the Mn(2+) binding site. 1-deoxy-D-xylulose 5-phosphate is bound by residues Ser-149, Glu-150, Ser-174, and His-197. A Mn(2+)-binding site is contributed by Glu-150. Gly-203 provides a ligand contact to NADPH. Ser-210, Asn-215, Lys-216, and Glu-219 together coordinate 1-deoxy-D-xylulose 5-phosphate. Position 219 (Glu-219) interacts with Mn(2+).

The protein belongs to the DXR family. Mg(2+) serves as cofactor. The cofactor is Mn(2+).

The enzyme catalyses 2-C-methyl-D-erythritol 4-phosphate + NADP(+) = 1-deoxy-D-xylulose 5-phosphate + NADPH + H(+). It functions in the pathway isoprenoid biosynthesis; isopentenyl diphosphate biosynthesis via DXP pathway; isopentenyl diphosphate from 1-deoxy-D-xylulose 5-phosphate: step 1/6. Functionally, catalyzes the NADPH-dependent rearrangement and reduction of 1-deoxy-D-xylulose-5-phosphate (DXP) to 2-C-methyl-D-erythritol 4-phosphate (MEP). This is 1-deoxy-D-xylulose 5-phosphate reductoisomerase from Geotalea daltonii (strain DSM 22248 / JCM 15807 / FRC-32) (Geobacter daltonii).